Consider the following 426-residue polypeptide: MAAIEAVNAREILDSRGNPTVEVEVLLEDGTFTRAAVPSGASTGAFEAYELRDGDAGRYLGKGVQKAVAAVVDEIGPAIQDLDAADQRIIDATMIELDGTENKSRLGANALLGVSLAVAKAAADSAELPLYRYLGGPNAHTLPVPMLNVINGGSHADTNVDIQEFMLLPVGASTFSEGLRWGVETYHALKSLLKKKGLSTGLGDEGGFAPNLDSNRAALDLLMEAIDAAGFTAGKQIALGLDVASSEFYSDGAYTFEGQKVDAAHLTAYFADLVASYPLITIEDPLDEDDWAGYDHFTAELGSKVQIVGDDLFVTNPKRLADGITRGVANSILVKVNQIGTLTETLDAVSLAQRSGYTTVLSHRSGETEDTTIADLAVAVEAGQIKTGAPARSERVAKYNQLLRIEQDLGAAAVYAGRSAFPRFQA.

Q163 is a (2R)-2-phosphoglycerate binding site. E205 (proton donor) is an active-site residue. Positions 242, 283, and 310 each coordinate Mg(2+). K335, R364, S365, and K386 together coordinate (2R)-2-phosphoglycerate. The active-site Proton acceptor is K335.

This sequence belongs to the enolase family. Mg(2+) is required as a cofactor.

It is found in the cytoplasm. It localises to the secreted. The protein resides in the cell surface. The enzyme catalyses (2R)-2-phosphoglycerate = phosphoenolpyruvate + H2O. It participates in carbohydrate degradation; glycolysis; pyruvate from D-glyceraldehyde 3-phosphate: step 4/5. Its function is as follows. Catalyzes the reversible conversion of 2-phosphoglycerate (2-PG) into phosphoenolpyruvate (PEP). It is essential for the degradation of carbohydrates via glycolysis. In Clavibacter sepedonicus (Clavibacter michiganensis subsp. sepedonicus), this protein is Enolase.